The sequence spans 278 residues: Tryptophan 2,3-dioxygenase (278 aa).

Substrate contacts are provided by residues 47–51 (FIIQH), Y110, and R114. Heme is bound at residue H236. T250 contributes to the substrate binding site.

It belongs to the tryptophan 2,3-dioxygenase family. Homotetramer. The cofactor is heme.

It catalyses the reaction L-tryptophan + O2 = N-formyl-L-kynurenine. Its pathway is amino-acid degradation; L-tryptophan degradation via kynurenine pathway; L-kynurenine from L-tryptophan: step 1/2. Functionally, heme-dependent dioxygenase that catalyzes the oxidative cleavage of the L-tryptophan (L-Trp) pyrrole ring and converts L-tryptophan to N-formyl-L-kynurenine. Catalyzes the oxidative cleavage of the indole moiety. The protein is Tryptophan 2,3-dioxygenase of Ruegeria pomeroyi (strain ATCC 700808 / DSM 15171 / DSS-3) (Silicibacter pomeroyi).